The following is a 478-amino-acid chain: PRAME family member 27 (478 aa).

Residues 17–40 (RSLLRDQALAMSTLEELPTELFPP) form an LRR 1 repeat. An LRR 1; degenerate repeat occupies 99–126 (RWKLQVLDLQDVCENFWMVWSEAMARGS). The LRR 2; degenerate repeat unit spans residues 181–205 (HLCCKKLKILGMPFRNIRSILKMVN). The stretch at 206–232 (LDCIQEVEVNCKWVLPILTQFTPYLGH) is one LRR 3; degenerate repeat. An LRR 4; degenerate repeat occupies 233 to 268 (MRNLQKLVLSHMDVSRYVSPEQKKEIVTQFTTQFLK). LRR repeat units follow at residues 269-294 (LHCL…LSCL), 295-326 (KTSL…SQLK), 327-348 (TLDL…ILLE), 351-378 (AATL…ALSR), and 379-403 (CFEL…LLSH).

The protein belongs to the PRAME family.

The protein is PRAME family member 27 of Homo sapiens (Human).